The chain runs to 420 residues: Glutamate dehydrogenase (420 aa).

Residue Lys105 is part of the active site. An NAD(+)-binding site is contributed by 220-226 (GYGNAGY).

Belongs to the Glu/Leu/Phe/Val dehydrogenases family. In terms of assembly, homohexamer.

Its subcellular location is the cytoplasm. It carries out the reaction L-glutamate + NAD(+) + H2O = 2-oxoglutarate + NH4(+) + NADH + H(+). The catalysed reaction is L-glutamate + NADP(+) + H2O = 2-oxoglutarate + NH4(+) + NADPH + H(+). The sequence is that of Glutamate dehydrogenase (gdhA) from Pyrococcus furiosus (strain ATCC 43587 / DSM 3638 / JCM 8422 / Vc1).